The sequence spans 177 residues: Large ribosomal subunit protein uL5 (177 aa).

This sequence belongs to the universal ribosomal protein uL5 family. In terms of assembly, part of the 50S ribosomal subunit; part of the 5S rRNA/L5/L18/L25 subcomplex. Contacts the 5S rRNA and the P site tRNA. Forms a bridge to the 30S subunit in the 70S ribosome.

This is one of the proteins that bind and probably mediate the attachment of the 5S RNA into the large ribosomal subunit, where it forms part of the central protuberance. In the 70S ribosome it contacts protein S13 of the 30S subunit (bridge B1b), connecting the 2 subunits; this bridge is implicated in subunit movement. Contacts the P site tRNA; the 5S rRNA and some of its associated proteins might help stabilize positioning of ribosome-bound tRNAs. In Neorickettsia sennetsu (strain ATCC VR-367 / Miyayama) (Ehrlichia sennetsu), this protein is Large ribosomal subunit protein uL5.